We begin with the raw amino-acid sequence, 264 residues long: 3-methyl-2-oxobutanoate hydroxymethyltransferase (264 aa).

Mg(2+)-binding residues include aspartate 45 and aspartate 84. 3-methyl-2-oxobutanoate-binding positions include 45–46 (DS), aspartate 84, and lysine 112. Glutamate 114 is a binding site for Mg(2+). The active-site Proton acceptor is the glutamate 181.

It belongs to the PanB family. In terms of assembly, homodecamer; pentamer of dimers. Requires Mg(2+) as cofactor.

The protein localises to the cytoplasm. It carries out the reaction 3-methyl-2-oxobutanoate + (6R)-5,10-methylene-5,6,7,8-tetrahydrofolate + H2O = 2-dehydropantoate + (6S)-5,6,7,8-tetrahydrofolate. It participates in cofactor biosynthesis; (R)-pantothenate biosynthesis; (R)-pantoate from 3-methyl-2-oxobutanoate: step 1/2. Functionally, catalyzes the reversible reaction in which hydroxymethyl group from 5,10-methylenetetrahydrofolate is transferred onto alpha-ketoisovalerate to form ketopantoate. This chain is 3-methyl-2-oxobutanoate hydroxymethyltransferase, found in Shewanella halifaxensis (strain HAW-EB4).